Here is an 882-residue protein sequence, read N- to C-terminus: MQNEKTQSKKPSPVPAEHSPMMAQYFGLKADYPDTLLFYRMGDFYELFFADAEKAARLLNITLTQRGQSAGQPVVMAGVPFHSVDTYLARLIKLGESVAICEQVGEVTGKGPVERKVVRVVTPGTLTDLELLSDKSESMLLAVHQGPRNTCGLAWLSVTQGEVHLAECAVDDLAQWVLRIAPGEIIFSAGTTPTFEARLRGAPLAGAVSVSVRPDWQFDAGLGEKKLLAQLQAASLAPWQAQDLPQAHAAAAALLGYAEHTQGQALTHIQSVRVQRSDELIDLPPTTRRNLELTQTLRGEDQPTLFSLLDTCMTGMGSRLLKNWLLEPRRDRGEAQQRLNAIAALQSGDAHTSRAGVWRQLREQLKGSTDVERITARIALRQVRPRELVALQLTLQKTELLTHTTRGLEVYLTQISGHLLAPEACADLLARAIDPEPAVLVRDGGVIASGFDAELDELRAIQTNCDGFLLDLEVREKARTGIANLRVQFNKVHGFFIEVTQGQVDKVPDDYRRRQTLKNAERFITPELKAFEDKALSAQERALAREKWLYEQVLDQLQVFVPALTRVARALATLDALCALTERSLTLDWCAPQFVKEPCLDITQGRHPVVQARLAETSSGAFIANDTRMGPKQRMQIITGPNMGGKSTYMRQIAVIVLLASMGSYVPASACRLGPIDAIHTRIGAADDLANAQSTFMLEMLEAAQILIAATPNSLVLMDEIGRGTSTFDGLALASSIATQLHDKTQAYTLFATHYFELTEFPAQHHAAINVHVSAAEAGRDIVFLHEIQPGPASKSYGIQVARLAGMPAAVLNQARQTLAALESQATQNQAQVDLFAAPPATETAADSAIETAVAALNPDNLSPREALEALYQLKKLASGKA.

Residue 640-647 (GPNMGGKS) coordinates ATP.

The protein belongs to the DNA mismatch repair MutS family.

Functionally, this protein is involved in the repair of mismatches in DNA. It is possible that it carries out the mismatch recognition step. This protein has a weak ATPase activity. This Albidiferax ferrireducens (strain ATCC BAA-621 / DSM 15236 / T118) (Rhodoferax ferrireducens) protein is DNA mismatch repair protein MutS.